We begin with the raw amino-acid sequence, 394 residues long: 1-deoxy-D-xylulose 5-phosphate reductoisomerase (394 aa).

Positions 10, 11, 12, 13, 38, 39, 40, and 123 each coordinate NADPH. Lys124 lines the 1-deoxy-D-xylulose 5-phosphate pocket. Residue Glu125 participates in NADPH binding. Position 149 (Asp149) interacts with Mn(2+). Ser150, Glu151, Ser175, and His198 together coordinate 1-deoxy-D-xylulose 5-phosphate. A Mn(2+)-binding site is contributed by Glu151. Gly204 lines the NADPH pocket. The 1-deoxy-D-xylulose 5-phosphate site is built by Ser211, Asn216, Lys217, and Glu220. Glu220 contributes to the Mn(2+) binding site.

Belongs to the DXR family. Mg(2+) is required as a cofactor. Mn(2+) serves as cofactor.

It catalyses the reaction 2-C-methyl-D-erythritol 4-phosphate + NADP(+) = 1-deoxy-D-xylulose 5-phosphate + NADPH + H(+). It participates in isoprenoid biosynthesis; isopentenyl diphosphate biosynthesis via DXP pathway; isopentenyl diphosphate from 1-deoxy-D-xylulose 5-phosphate: step 1/6. In terms of biological role, catalyzes the NADPH-dependent rearrangement and reduction of 1-deoxy-D-xylulose-5-phosphate (DXP) to 2-C-methyl-D-erythritol 4-phosphate (MEP). The sequence is that of 1-deoxy-D-xylulose 5-phosphate reductoisomerase from Cereibacter sphaeroides (strain ATCC 17029 / ATH 2.4.9) (Rhodobacter sphaeroides).